An 803-amino-acid chain; its full sequence is Ras GTPase-activating protein 4 (803 aa).

C2 domains follow at residues 1-105 (MAKR…SGWA) and 116-232 (VQGE…EGWF). The Ca(2+) site is built by Asp-21, Asp-27, Asp-74, Asp-76, Ser-79, Asp-82, Asp-149, Asp-155, Asp-202, Asp-204, Ser-207, and Asp-210. Positions 318–546 (GLAKDFLDLL…AQLKDFITKL (229 aa)) constitute a Ras-GAP domain. The 108-residue stretch at 566 to 673 (PPVKEGPLFI…WLSALRKVSI (108 aa)) folds into the PH domain. The segment at 675–711 (NTGLLGSYHPGVFRGDKWSCCHQKEKTGQGCDKTRSR) adopts a Btk-type zinc-finger fold. Zn(2+) contacts are provided by His-683, Cys-694, Cys-695, and Cys-705. The disordered stretch occupies residues 781-803 (EAHSSSPAGSPPSEPNCLLELQT).

Ca(2+) serves as cofactor. As to expression, widely expressed.

Its subcellular location is the cytoplasm. It is found in the cytosol. The protein resides in the cell membrane. Its function is as follows. Ca(2+)-dependent Ras GTPase-activating protein, that switches off the Ras-MAPK pathway following a stimulus that elevates intracellular calcium. Functions as an adaptor for Cdc42 and Rac1 during FcR-mediated phagocytosis. This chain is Ras GTPase-activating protein 4 (RASA4), found in Homo sapiens (Human).